Here is a 401-residue protein sequence, read N- to C-terminus: Coenzyme A biosynthesis bifunctional protein CoaBC (401 aa).

The tract at residues 1–190 (MQTLAGKKIL…FQPKPLQDKS (190 aa)) is phosphopantothenoylcysteine decarboxylase. Cys159 functions as the Proton donor in the catalytic mechanism. Residues 191-401 (ILITAGPTRE…LKQIQTLMGH (211 aa)) form a phosphopantothenate--cysteine ligase region. CTP-binding positions include Asp279, Lys289, 307–310 (PDIV), Phe326, Lys340, and Lys344.

In the N-terminal section; belongs to the HFCD (homo-oligomeric flavin containing Cys decarboxylase) superfamily. This sequence in the C-terminal section; belongs to the PPC synthetase family. It depends on Mg(2+) as a cofactor. FMN is required as a cofactor.

The catalysed reaction is N-[(R)-4-phosphopantothenoyl]-L-cysteine + H(+) = (R)-4'-phosphopantetheine + CO2. It carries out the reaction (R)-4'-phosphopantothenate + L-cysteine + CTP = N-[(R)-4-phosphopantothenoyl]-L-cysteine + CMP + diphosphate + H(+). Its pathway is cofactor biosynthesis; coenzyme A biosynthesis; CoA from (R)-pantothenate: step 2/5. It functions in the pathway cofactor biosynthesis; coenzyme A biosynthesis; CoA from (R)-pantothenate: step 3/5. In terms of biological role, catalyzes two sequential steps in the biosynthesis of coenzyme A. In the first step cysteine is conjugated to 4'-phosphopantothenate to form 4-phosphopantothenoylcysteine. In the second step the latter compound is decarboxylated to form 4'-phosphopantotheine. The protein is Coenzyme A biosynthesis bifunctional protein CoaBC of Vibrio vulnificus (strain YJ016).